We begin with the raw amino-acid sequence, 87 residues long: Small ribosomal subunit protein uS17 (87 aa).

This sequence belongs to the universal ribosomal protein uS17 family. In terms of assembly, part of the 30S ribosomal subunit.

Its function is as follows. One of the primary rRNA binding proteins, it binds specifically to the 5'-end of 16S ribosomal RNA. This chain is Small ribosomal subunit protein uS17, found in Staphylococcus aureus (strain Mu3 / ATCC 700698).